A 359-amino-acid polypeptide reads, in one-letter code: Chaperone protein DnaJ (359 aa).

One can recognise a J domain in the interval Asp3 to Gly68. The CR-type zinc-finger motif lies at Gly128 to Gln205. Zn(2+) is bound by residues Cys141, Cys144, Cys157, Cys160, Cys179, Cys182, Cys193, and Cys196. CXXCXGXG motif repeat units lie at residues Cys141 to Gly148, Cys157 to Gly164, Cys179 to Gly186, and Cys193 to Gly200.

This sequence belongs to the DnaJ family. In terms of assembly, homodimer. The cofactor is Zn(2+).

Its subcellular location is the cytoplasm. Functionally, participates actively in the response to hyperosmotic and heat shock by preventing the aggregation of stress-denatured proteins and by disaggregating proteins, also in an autonomous, DnaK-independent fashion. Unfolded proteins bind initially to DnaJ; upon interaction with the DnaJ-bound protein, DnaK hydrolyzes its bound ATP, resulting in the formation of a stable complex. GrpE releases ADP from DnaK; ATP binding to DnaK triggers the release of the substrate protein, thus completing the reaction cycle. Several rounds of ATP-dependent interactions between DnaJ, DnaK and GrpE are required for fully efficient folding. Also involved, together with DnaK and GrpE, in the DNA replication of plasmids through activation of initiation proteins. The chain is Chaperone protein DnaJ from Campylobacter hominis (strain ATCC BAA-381 / DSM 21671 / CCUG 45161 / LMG 19568 / NCTC 13146 / CH001A).